A 163-amino-acid chain; its full sequence is CASP-like protein 1C2 (163 aa).

Over 1–7 (MAKLHRL) the chain is Cytoplasmic. Residues 8–28 (ISAVLRLAAAGAAAAAAVIMV) form a helical membrane-spanning segment. Residues 29 to 50 (TSHETTSLFGIEMEAKYSYTPS) lie on the Extracellular side of the membrane. Residues 51–71 (FVFFVVAFAVTFAYSLLAAVL) form a helical membrane-spanning segment. At 72 to 80 (VRPGTTASR) the chain is on the cytoplasmic side. A helical membrane pass occupies residues 81–101 (LVLLSDVTVGMLLTGAVAATG). Residues 102 to 129 (AISQVGKSGNEHAGWLPICAQVQAYCGH) lie on the Extracellular side of the membrane. The chain crosses the membrane as a helical span at residues 130–150 (VMGALIAGFVSLLLYFLIIMY). Over 151–163 (SLHAVAEPLCSCH) the chain is Cytoplasmic.

This sequence belongs to the Casparian strip membrane proteins (CASP) family. As to quaternary structure, homodimer and heterodimers.

The protein localises to the cell membrane. This is CASP-like protein 1C2 from Zea mays (Maize).